A 711-amino-acid chain; its full sequence is Putative membrane protein IgaA homolog (711 aa).

Position 1 (methionine 1) is a topological domain, periplasmic. Residues 2–22 traverse the membrane as a helical segment; sequence STIVIFLAALLACSLLAGWLI. Over 23-204 the chain is Cytoplasmic; sequence KVRSRRRQLP…YALSRPRGLR (182 aa). 2 consecutive transmembrane segments (helical) span residues 205–225 and 226–246; these read EALL…TPDV and FVPW…WGLF. At 247-339 the chain is on the cytoplasmic side; that stretch reads APPAKSSLRE…KNFPLQHWLR (93 aa). A helical membrane pass occupies residues 340 to 360; it reads STIIAAGSLLVLFMLLFWIPL. Residues 361–655 are Periplasmic-facing; sequence DMPLKFTLSW…IPDRSGLWRY (295 aa). A helical transmembrane segment spans residues 656–676; it reads LSTTLLLLTMLGSAIYNGVQA. Over 677-711 the chain is Cytoplasmic; the sequence is WRRYQRHRTRMMKIQAYYESCLNPQLITPSESLIE.

It belongs to the IgaA family.

It localises to the cell inner membrane. This is Putative membrane protein IgaA homolog (yrfF) from Escherichia coli O157:H7.